Reading from the N-terminus, the 131-residue chain is ATP synthase epsilon chain (131 aa).

It belongs to the ATPase epsilon chain family. As to quaternary structure, F-type ATPases have 2 components, CF(1) - the catalytic core - and CF(0) - the membrane proton channel. CF(1) has five subunits: alpha(3), beta(3), gamma(1), delta(1), epsilon(1). CF(0) has three main subunits: a, b and c.

Its subcellular location is the cell inner membrane. Produces ATP from ADP in the presence of a proton gradient across the membrane. The polypeptide is ATP synthase epsilon chain (Helicobacter hepaticus (strain ATCC 51449 / 3B1)).